The following is a 258-amino-acid chain: Ditrans,polycis-undecaprenyl-diphosphate synthase ((2E,6E)-farnesyl-diphosphate specific) (258 aa).

The active site involves Asp-24. Asp-24 contacts Mg(2+). Substrate contacts are provided by residues 25–28 (GNGR), Trp-29, Arg-37, His-41, and 69–71 (SSE). Asn-72 acts as the Proton acceptor in catalysis. Residues Trp-73, Arg-75, Arg-192, and 198 to 200 (RIS) contribute to the substrate site. Glu-211 lines the Mg(2+) pocket.

This sequence belongs to the UPP synthase family. As to quaternary structure, homodimer. Mg(2+) serves as cofactor.

The catalysed reaction is 8 isopentenyl diphosphate + (2E,6E)-farnesyl diphosphate = di-trans,octa-cis-undecaprenyl diphosphate + 8 diphosphate. In terms of biological role, catalyzes the sequential condensation of isopentenyl diphosphate (IPP) with (2E,6E)-farnesyl diphosphate (E,E-FPP) to yield (2Z,6Z,10Z,14Z,18Z,22Z,26Z,30Z,34E,38E)-undecaprenyl diphosphate (di-trans,octa-cis-UPP). UPP is the precursor of glycosyl carrier lipid in the biosynthesis of bacterial cell wall polysaccharide components such as peptidoglycan and lipopolysaccharide. This Xanthomonas oryzae pv. oryzae (strain KACC10331 / KXO85) protein is Ditrans,polycis-undecaprenyl-diphosphate synthase ((2E,6E)-farnesyl-diphosphate specific).